A 311-amino-acid polypeptide reads, in one-letter code: Sensor histidine kinase YcbM (311 aa).

The helical transmembrane segment at Met1–Ile21 threads the bilayer. Residues Met22 to Tyr311 are Cytoplasmic-facing. The 219-residue stretch at Asn92 to Thr310 folds into the Histidine kinase domain. Position 95 is a phosphohistidine; by autocatalysis (His95).

The protein resides in the cell membrane. It carries out the reaction ATP + protein L-histidine = ADP + protein N-phospho-L-histidine.. Functionally, member of the two-component regulatory system YcbM/YcbL. Probably activates YcbL by phosphorylation. This chain is Sensor histidine kinase YcbM (ycbM), found in Bacillus subtilis (strain 168).